The sequence spans 732 residues: 1,4-alpha-glucan branching enzyme GlgB (732 aa).

Catalysis depends on D415, which acts as the Nucleophile. E468 (proton donor) is an active-site residue.

This sequence belongs to the glycosyl hydrolase 13 family. GlgB subfamily. Monomer.

It carries out the reaction Transfers a segment of a (1-&gt;4)-alpha-D-glucan chain to a primary hydroxy group in a similar glucan chain.. The protein operates within glycan biosynthesis; glycogen biosynthesis. Catalyzes the formation of the alpha-1,6-glucosidic linkages in glycogen by scission of a 1,4-alpha-linked oligosaccharide from growing alpha-1,4-glucan chains and the subsequent attachment of the oligosaccharide to the alpha-1,6 position. The sequence is that of 1,4-alpha-glucan branching enzyme GlgB from Nitrosomonas eutropha (strain DSM 101675 / C91 / Nm57).